The following is a 223-amino-acid chain: Putative germin-like protein 2-2 (223 aa).

Residues 1-28 (MAAVGACFLQQLAVVALLALWCSHGAIA) form the signal peptide. A disulfide bond links Cys-38 and Cys-53. The Cupin type-1 domain maps to 67-217 (SGLHMAGNTT…AFQVDKNIID (151 aa)). 2 N-linked (GlcNAc...) asparagine glycosylation sites follow: Asn-74 and Asn-82. Positions 115, 117, 122, and 163 each coordinate Mn(2+). Asn-168 carries N-linked (GlcNAc...) asparagine glycosylation.

It belongs to the germin family. Oligomer (believed to be a pentamer but probably hexamer).

The protein localises to the secreted. It is found in the extracellular space. Its subcellular location is the apoplast. Functionally, may play a role in plant defense. Probably has no oxalate oxidase activity even if the active site is conserved. This Oryza sativa subsp. japonica (Rice) protein is Putative germin-like protein 2-2.